We begin with the raw amino-acid sequence, 254 residues long: Ribosomal RNA small subunit methyltransferase G (254 aa).

The tract at residues 1-21 is disordered; that stretch reads MPEGDGVPRETPSPSVVPESP. A compositionally biased stretch (low complexity) spans 9–21; sequence RETPSPSVVPESP. Residues glycine 90, leucine 95, 142–143, and arginine 157 contribute to the S-adenosyl-L-methionine site; that span reads AE. Residues 230 to 254 form a disordered region; that stretch reads GPLRAATAPAPPGAAKRRPGKGNRR. Basic residues predominate over residues 244–254; it reads AKRRPGKGNRR.

This sequence belongs to the methyltransferase superfamily. RNA methyltransferase RsmG family.

It localises to the cytoplasm. Functionally, specifically methylates the N7 position of guanine in position 518 of 16S rRNA. This is Ribosomal RNA small subunit methyltransferase G from Kineococcus radiotolerans (strain ATCC BAA-149 / DSM 14245 / SRS30216).